The chain runs to 480 residues: DnaJ homolog subfamily A member 3, mitochondrial (480 aa).

Arg-58 is modified (omega-N-methylarginine; by CARM1). The 66-residue stretch at 93-158 folds into the J domain; the sequence is DYYQILGVPR…VKRKQYDAYG (66 aa). The residue at position 134 (Lys-134) is an N6-acetyllysine. The segment at 223–301 adopts a CR-type zinc-finger fold; that stretch reads GVNKEFTVNI…CRGAGQAKQK (79 aa). Cys-236 is a Zn(2+) binding site. CXXCXGXG motif repeat units follow at residues 236–243, 253–260, 275–282, and 289–296; these read CERCNGKG, CHYCGGSG, CRRCGGRG, and CVVCRGAG. Position 238 is an omega-N-methylarginine; by CARM1 (Arg-238). Residues Cys-239, Cys-253, Cys-256, Cys-275, Cys-278, Cys-289, and Cys-292 each contribute to the Zn(2+) site. Omega-N-methylarginine; by CARM1 is present on Arg-293. The residue at position 398 (Ser-398) is a Phosphoserine. The segment covering 443–456 has biased composition (polar residues); it reads LTSSGGSTMDSSAG. The disordered stretch occupies residues 443 to 471; sequence LTSSGGSTMDSSAGSKARREAGEDEEGFL.

As to quaternary structure, interacts with JAK2, HSPA9B and IFN-gammaR2 chain. Interacts with Ras GTPase-activating protein 1 (RASA1). Isoform 2 interacts with MUSK (via the cytoplasmic domain). Tyrosine phosphorylated. As to expression, widely expressed with highest levels in heart, liver, lung and skeletal muscles. Also expressed in keratinocytes; expression level and distribution is altered in basal cell carcinomas.

Its subcellular location is the mitochondrion matrix. It localises to the cytoplasm. The protein resides in the cytosol. It is found in the postsynaptic cell membrane. Modulates apoptotic signal transduction or effector structures within the mitochondrial matrix. Affect cytochrome C release from the mitochondria and caspase 3 activation, but not caspase 8 activation. Isoform 1 increases apoptosis triggered by both TNF and the DNA-damaging agent mytomycin C; in sharp contrast, isoform 2 suppresses apoptosis. Can modulate IFN-gamma-mediated transcriptional activity. Isoform 2 may play a role in neuromuscular junction development as an effector of the MUSK signaling pathway. This chain is DnaJ homolog subfamily A member 3, mitochondrial (DNAJA3), found in Homo sapiens (Human).